A 200-amino-acid polypeptide reads, in one-letter code: Bombinin-like peptides 3 (200 aa).

The or 18 signal peptide spans Met-1 to Ala-16. Phenylalanine amide is present on residues Phe-68 and Phe-129.

It belongs to the bombinin family. Expressed by the skin glands.

It localises to the secreted. Its function is as follows. Has antimicrobial activity, but no hemolytic activity. Preference on killing Gram-negative non-enteric bacteria. This chain is Bombinin-like peptides 3, found in Bombina orientalis (Oriental fire-bellied toad).